The chain runs to 382 residues: MSLNIFWFLPTHGDGKYLGTSDGARAVDHGYLQQIAQAADRLGFGGVLIPTGRSCEDSWLVAASLIPVTERLKFLVALRPGIISPTVAARQAATLDRLSNGRALFNLVTGGDPDELAGDGLHLNHQERYEASVEFTRIWRKVLEGENVDYDGKHIQVKGAKLLYPPVQQPRPPLYFGGSSEAAQDLAAEQVELYLTWGEPPAAVAEKIAQVREKAAAQGREVRFGIRLHVIVRETNEEAWAAADRLISHLDDDTIARAQASLARFDSVGQQRMAALHGGNRDNLEVSPNLWAGVGLVRGGAGTALVGDGPTVAARVKEYADLGIDTFIFSGYPHLEESYRVAELLFLHIDVQRPEQPKTGGYVSPFGEMVANDILPKSVSQS.

It belongs to the SsuD family.

The catalysed reaction is an alkanesulfonate + FMNH2 + O2 = an aldehyde + FMN + sulfite + H2O + 2 H(+). Functionally, catalyzes the desulfonation of aliphatic sulfonates. This Pseudomonas sp protein is Alkanesulfonate monooxygenase.